The following is a 512-amino-acid chain: Maturase K (512 aa).

This sequence belongs to the intron maturase 2 family. MatK subfamily.

The protein resides in the plastid. It is found in the chloroplast. In terms of biological role, usually encoded in the trnK tRNA gene intron. Probably assists in splicing its own and other chloroplast group II introns. The protein is Maturase K of Lilium longiflorum (Trumpet lily).